A 525-amino-acid chain; its full sequence is Mitochondrial-processing peptidase subunit alpha (525 aa).

Residues 1 to 33 constitute a mitochondrion transit peptide; the sequence is MAAMVLAATRLLRGSGSWGRSRPRFGDPAYRRF. K64 is modified (N6-succinyllysine). N6-acetyllysine is present on K299.

This sequence belongs to the peptidase M16 family. In terms of assembly, heterodimer of PMPCA (alpha) and PMPCB (beta) subunits, forming the mitochondrial processing protease (MPP) in which PMPCA is involved in substrate recognition and binding and PMPCB is the catalytic subunit.

It localises to the mitochondrion matrix. The protein resides in the mitochondrion inner membrane. Substrate recognition and binding subunit of the essential mitochondrial processing protease (MPP), which cleaves the mitochondrial sequence off newly imported precursors proteins. The sequence is that of Mitochondrial-processing peptidase subunit alpha (PMPCA) from Bos taurus (Bovine).